We begin with the raw amino-acid sequence, 167 residues long: UPF0102 protein RB9115 (167 aa).

Belongs to the UPF0102 family.

The sequence is that of UPF0102 protein RB9115 from Rhodopirellula baltica (strain DSM 10527 / NCIMB 13988 / SH1).